A 207-amino-acid polypeptide reads, in one-letter code: Transcriptional regulator GfcR (207 aa).

This sequence belongs to the purine/pyrimidine phosphoribosyltransferase family. GfcR subfamily.

This chain is Transcriptional regulator GfcR, found in Methanocella arvoryzae (strain DSM 22066 / NBRC 105507 / MRE50).